A 255-amino-acid chain; its full sequence is MAENDSWDADDFEAEDLNQKGAASGPVIVKDRWEGEDEEEDVKDNWDDEEEAQDATKQEPQKTELKVPEKKKLQEKIKEKENLQKKRKEELKKQALESSNLPEITPEEQLAEKLRQQKLQEDSDLELAKEAFGVNVPVTGIDAMNPSTREDFTEFGKLLKEKITQYERSLYYPGFLEALVRDVCLSLEVEDLKKINSSLTVLCFEKQKQEKQQTKTKKKKKGVVPGGGLKGNMKDYLEDYGGMDEGYGREFDDFM.

Acidic residues-rich tracts occupy residues 1–16 (MAEN…EAED) and 34–53 (EGED…EEAQ). The segment at 1–107 (MAENDSWDAD…SSNLPEITPE (107 aa)) is disordered. The segment covering 54–95 (DATKQEPQKTELKVPEKKKLQEKIKEKENLQKKRKEELKKQA) has biased composition (basic and acidic residues). The stretch at 69-131 (EKKKLQEKIK…DSDLELAKEA (63 aa)) forms a coiled coil.

The protein belongs to the eIF-3 subunit J family. Component of the eukaryotic translation initiation factor 3 (eIF-3) complex, which is composed of 13 subunits: eif3a, eif3b, eif3c, eif3d, eif3e, eif3f, eif3g, eif3h, eif3i, eif3j, eif3k, eif3l and eif3m.

It localises to the cytoplasm. Functionally, component of the eukaryotic translation initiation factor 3 (eIF-3) complex, which is involved in protein synthesis of a specialized repertoire of mRNAs and, together with other initiation factors, stimulates binding of mRNA and methionyl-tRNAi to the 40S ribosome. The eIF-3 complex specifically targets and initiates translation of a subset of mRNAs involved in cell proliferation. The polypeptide is Eukaryotic translation initiation factor 3 subunit J (eif3j) (Xenopus laevis (African clawed frog)).